The primary structure comprises 37 residues: Cytochrome b6-f complex subunit 5 (37 aa).

A helical membrane pass occupies residues 5 to 25; the sequence is LLSGIVLGLIPITLAGLFVTA.

The protein belongs to the PetG family. The 4 large subunits of the cytochrome b6-f complex are cytochrome b6, subunit IV (17 kDa polypeptide, PetD), cytochrome f and the Rieske protein, while the 4 small subunits are PetG, PetL, PetM and PetN. The complex functions as a dimer.

Its subcellular location is the plastid. The protein localises to the chloroplast thylakoid membrane. Component of the cytochrome b6-f complex, which mediates electron transfer between photosystem II (PSII) and photosystem I (PSI), cyclic electron flow around PSI, and state transitions. PetG is required for either the stability or assembly of the cytochrome b6-f complex. This chain is Cytochrome b6-f complex subunit 5, found in Chaetosphaeridium globosum (Charophycean green alga).